Consider the following 288-residue polypeptide: Ribosome biogenesis GTPase A (288 aa).

The CP-type G domain occupies 14-179; the sequence is RRQVTEKLKL…LLDTPGILWP (166 aa). Residues 58-61, 131-136, and G175 contribute to the GTP site; these read NKVD and NVGKST.

This sequence belongs to the TRAFAC class YlqF/YawG GTPase family. MTG1 subfamily. In terms of assembly, interacts with ctc. Interacts with the immature 50S ribosome subunit. 2 molecules of rbgA bind to one 50S subunit.

The protein localises to the cytoplasm. Functionally, essential protein that is required for a late step of 50S ribosomal subunit assembly. Has GTPase activity that is stimulated by interaction with the immature 50S ribosome subunit. Binds to the 23S rRNA. Required for the association of ribosomal proteins rplP and rpmA with the large subunit. This chain is Ribosome biogenesis GTPase A, found in Priestia megaterium (strain DSM 319 / IMG 1521) (Bacillus megaterium).